A 167-amino-acid polypeptide reads, in one-letter code: Photosystem I assembly protein Ycf3 (167 aa).

TPR repeat units follow at residues 35 to 68 (AFAY…EVDA), 72 to 105 (SYIL…NPSL), and 120 to 153 (GEQA…APTS).

Belongs to the Ycf3 family.

It is found in the plastid. The protein resides in the chloroplast thylakoid membrane. Functionally, essential for the assembly of the photosystem I (PSI) complex. May act as a chaperone-like factor to guide the assembly of the PSI subunits. The protein is Photosystem I assembly protein Ycf3 of Chlorokybus atmophyticus (Soil alga).